Reading from the N-terminus, the 206-residue chain is Repetitive proline-rich cell wall protein 1 (206 aa).

Residues 1–22 form the signal peptide; the sequence is MASSNFLVLLLFALFAIPQGLA. Tandem repeats lie at residues 32–36, 37–41, 42–46, 47–51, 52–56, 57–61, 62–66, 67–71, 72–76, 77–81, 82–86, 87–91, 92–96, 97–101, 102–106, 107–111, 112–116, 117–121, 122–126, 127–131, 132–136, 137–141, 142–146, 147–151, 152–156, 157–161, 162–166, 167–171, 172–176, 177–181, 182–186, 187–191, and 192–196. Positions 32 to 201 are 34 X 5 AA approximate tandem repeats of P-P-V-[EVY]-K; the sequence is PPVYKPPVEK…PPVEKPPVYG (170 aa). The tract at residues 51 to 84 is disordered; the sequence is KPPVYKPPVEKPPVYKPPVYKPPVYKPPVVKPPV. The tract at residues 132–206 is disordered; the sequence is PPVEKPPVYK…PPVYGPPHHP (75 aa). One copy of the 34; approximate repeat lies at 197-201; it reads PPVYG.

It belongs to the plant proline-rich protein superfamily. ENOD12 family. As to expression, expressed in hypocotyls, roots and mature root nodules.

The protein resides in the secreted. It is found in the cell wall. Its function is as follows. This is a developmentally regulated putative cell wall protein. This chain is Repetitive proline-rich cell wall protein 1 (PRP1), found in Medicago truncatula (Barrel medic).